A 266-amino-acid polypeptide reads, in one-letter code: MQGNTRRTGVMTDVHRRFLQLLMTHGVLEECDVKRLQKHCYKVHDCNATVEKLEDFINTINSVLESLYIEIKKGVTEDDGRPIYALVNLATTSVSKMASDFAENELDLFRKALELIIDSDTGFASSTNILNLVDQLKGKKMRKKEAEHVLQKFVQNKWLIEKEGEFTLHGRAILEMDQYIRETYPDAVKVCNICRSLLIQGQSCETCGIRMHLPCVAKYFQSSSEPHCPHCNDYWPHEVPEVFDPEKERETGMSRSNKRPSRSRQH.

The tract at residues 1–102 (MQGNTRRTGV…SVSKMASDFA (102 aa)) is interaction with NSMCE3. The segment at 191 to 232 (CNICRSLLIQGQSCETCGIRMHLPCVAKYFQSSSEPHCPHCN) adopts an RING-type; atypical zinc-finger fold. A compositionally biased stretch (basic and acidic residues) spans 243-252 (FDPEKERETG). The disordered stretch occupies residues 243-266 (FDPEKERETGMSRSNKRPSRSRQH). The span at 256–266 (SNKRPSRSRQH) shows a compositional bias: basic residues.

It belongs to the NSE1 family. Component of the SMC5-SMC6 complex which consists at least of SMC5, SMC6, NSMCE2, NSMCE1, NSMCE4A or EID3 and NSMCE3. NSMCE1, NSMCE4A or EID3 and NSMCE3 probably form a subcomplex that bridges the head domains of the SMC5-SMC6 heterodimer. Interacts with NSMCE3. Post-translationally, ubiquitinated.

The protein resides in the nucleus. Its subcellular location is the chromosome. It is found in the telomere. The catalysed reaction is S-ubiquitinyl-[E2 ubiquitin-conjugating enzyme]-L-cysteine + [acceptor protein]-L-lysine = [E2 ubiquitin-conjugating enzyme]-L-cysteine + N(6)-ubiquitinyl-[acceptor protein]-L-lysine.. Its function is as follows. RING-type zinc finger-containing E3 ubiquitin ligase that assembles with melanoma antigen protein (MAGE) to catalyze the direct transfer of ubiquitin from E2 ubiquitin-conjugating enzyme to a specific substrate. Within MAGE-RING ubiquitin ligase complex, MAGE stimulates and specifies ubiquitin ligase activity likely through recruitment and/or stabilization of the E2 ubiquitin-conjugating enzyme at the E3:substrate complex. Involved in maintenance of genome integrity, DNA damage response and DNA repair. NSMCE3/MAGEG1 and NSMCE1 ubiquitin ligase are components of SMC5-SMC6 complex and may positively regulate homologous recombination-mediated DNA repair. This is Non-structural maintenance of chromosomes element 1 homolog (NSMCE1) from Bos taurus (Bovine).